The chain runs to 668 residues: UvrABC system protein B (668 aa).

The Helicase ATP-binding domain maps to 36–276 (DNIKGGEKAQ…EEAIKNIMEE (241 aa)). 49–56 (GATGTGKT) contributes to the ATP binding site. Residues 102–125 (YYDYYQPEAYVPSSDTYIEKDSSV) carry the Beta-hairpin motif. Positions 440–606 (QMDDLLGEIN…TIKKEIRDLI (167 aa)) constitute a Helicase C-terminal domain. The 36-residue stretch at 632–667 (QEAIKKLQKQMHEAAELLDFELAAQIRDMVLELKSM) folds into the UVR domain.

This sequence belongs to the UvrB family. In terms of assembly, forms a heterotetramer with UvrA during the search for lesions. Interacts with UvrC in an incision complex.

The protein resides in the cytoplasm. Functionally, the UvrABC repair system catalyzes the recognition and processing of DNA lesions. A damage recognition complex composed of 2 UvrA and 2 UvrB subunits scans DNA for abnormalities. Upon binding of the UvrA(2)B(2) complex to a putative damaged site, the DNA wraps around one UvrB monomer. DNA wrap is dependent on ATP binding by UvrB and probably causes local melting of the DNA helix, facilitating insertion of UvrB beta-hairpin between the DNA strands. Then UvrB probes one DNA strand for the presence of a lesion. If a lesion is found the UvrA subunits dissociate and the UvrB-DNA preincision complex is formed. This complex is subsequently bound by UvrC and the second UvrB is released. If no lesion is found, the DNA wraps around the other UvrB subunit that will check the other stand for damage. The chain is UvrABC system protein B from Streptococcus thermophilus (strain ATCC BAA-491 / LMD-9).